The primary structure comprises 336 residues: Type II methyltransferase M2.HphI (336 aa).

The protein belongs to the N(4)/N(6)-methyltransferase family.

The catalysed reaction is a 2'-deoxyadenosine in DNA + S-adenosyl-L-methionine = an N(6)-methyl-2'-deoxyadenosine in DNA + S-adenosyl-L-homocysteine + H(+). In terms of biological role, an alpha subtype methylase that recognizes the double-stranded sequence 5'-GGTGA-3', probably methylates A-5 on the top strand, and protects the DNA from cleavage by the HphI endonuclease. This Haemophilus parahaemolyticus protein is Type II methyltransferase M2.HphI (hphIBM).